Consider the following 178-residue polypeptide: dCTP deaminase (178 aa).

DCTP is bound by residues 99–104 (RSTWAR) and aspartate 115. Glutamate 125 serves as the catalytic Proton donor/acceptor. 2 residues coordinate dCTP: tyrosine 157 and glutamine 164.

This sequence belongs to the dCTP deaminase family. As to quaternary structure, homotrimer.

It catalyses the reaction dCTP + H2O + H(+) = dUTP + NH4(+). The protein operates within pyrimidine metabolism; dUMP biosynthesis; dUMP from dCTP (dUTP route): step 1/2. Its function is as follows. Catalyzes the deamination of dCTP to dUTP. The polypeptide is dCTP deaminase (Aeropyrum pernix (strain ATCC 700893 / DSM 11879 / JCM 9820 / NBRC 100138 / K1)).